A 175-amino-acid polypeptide reads, in one-letter code: Catabolic 3-dehydroquinase (175 aa).

Catalysis depends on Y26, which acts as the Proton acceptor. The substrate site is built by N104, H110, and D117. The active-site Proton donor is H130. Substrate is bound by residues 131-132 (VS) and R141.

This sequence belongs to the type-II 3-dehydroquinase family. As to quaternary structure, homododecamer. Adopts a ring-like structure, composed of an arrangement of two hexameric rings stacked on top of one another.

The catalysed reaction is 3-dehydroquinate = 3-dehydroshikimate + H2O. It participates in aromatic compound metabolism; 3,4-dihydroxybenzoate biosynthesis; 3,4-dihydroxybenzoate from 3-dehydroquinate: step 1/2. Functionally, is involved in the catabolism of quinate. Allows the utilization of quinate as carbon source via the beta-ketoadipate pathway. This Sordaria macrospora (strain ATCC MYA-333 / DSM 997 / K(L3346) / K-hell) protein is Catabolic 3-dehydroquinase.